The sequence spans 201 residues: MARSVRVLVDMDGVLADFEAGLLRGFRRRFPEEPHVPLEQRRGFLAREQYRALRPDLADKVASVYEAPGFFLDLEPIPGALDAVREMNDLPDTQVFICTSPLLKYHHCVGEKYRWVEQHLGPQFVERIILTRDKTVVLGDLLIDDKDTVRGQEETPSWEHILFTCCHNRHLVLPPTRRRLLSWSDNWREILDSKRGAAQRE.

The active-site Nucleophile is the Asp-10. Residues Asp-10 and Asp-12 each coordinate Mg(2+). Asp-12 functions as the Proton donor in the catalytic mechanism. Substrate-binding residues include Phe-18, Phe-44, Tyr-65, Thr-99, and Lys-134. Asp-145 lines the Mg(2+) pocket. Ser-182 carries the post-translational modification Phosphoserine.

Belongs to the 5'(3')-deoxyribonucleotidase family. In terms of assembly, homodimer. The cofactor is Mg(2+). Detected in skeletal muscle, heart and pancreas.

The protein localises to the cytoplasm. In terms of biological role, dephosphorylates the 5' and 2'(3')-phosphates of deoxyribonucleotides, with a preference for dUMP and dTMP, intermediate activity towards dGMP, and low activity towards dCMP and dAMP. The sequence is that of 5'(3')-deoxyribonucleotidase, cytosolic type (NT5C) from Homo sapiens (Human).